The primary structure comprises 386 residues: ATP phosphoribosyltransferase regulatory subunit (386 aa).

It belongs to the class-II aminoacyl-tRNA synthetase family. HisZ subfamily. Heteromultimer composed of HisG and HisZ subunits.

Its subcellular location is the cytoplasm. Its pathway is amino-acid biosynthesis; L-histidine biosynthesis; L-histidine from 5-phospho-alpha-D-ribose 1-diphosphate: step 1/9. Its function is as follows. Required for the first step of histidine biosynthesis. May allow the feedback regulation of ATP phosphoribosyltransferase activity by histidine. This is ATP phosphoribosyltransferase regulatory subunit from Variovorax paradoxus (strain S110).